Consider the following 242-residue polypeptide: Biosynthetic peptidoglycan transglycosylase (242 aa).

A helical transmembrane segment spans residues 19–39 (ILAALAVFWGGGIALFSVVPV).

It belongs to the glycosyltransferase 51 family.

Its subcellular location is the cell inner membrane. It catalyses the reaction [GlcNAc-(1-&gt;4)-Mur2Ac(oyl-L-Ala-gamma-D-Glu-L-Lys-D-Ala-D-Ala)](n)-di-trans,octa-cis-undecaprenyl diphosphate + beta-D-GlcNAc-(1-&gt;4)-Mur2Ac(oyl-L-Ala-gamma-D-Glu-L-Lys-D-Ala-D-Ala)-di-trans,octa-cis-undecaprenyl diphosphate = [GlcNAc-(1-&gt;4)-Mur2Ac(oyl-L-Ala-gamma-D-Glu-L-Lys-D-Ala-D-Ala)](n+1)-di-trans,octa-cis-undecaprenyl diphosphate + di-trans,octa-cis-undecaprenyl diphosphate + H(+). The protein operates within cell wall biogenesis; peptidoglycan biosynthesis. In terms of biological role, peptidoglycan polymerase that catalyzes glycan chain elongation from lipid-linked precursors. The chain is Biosynthetic peptidoglycan transglycosylase from Salmonella schwarzengrund (strain CVM19633).